The primary structure comprises 98 residues: uncharacterized protein (98 aa).

The next 2 helical transmembrane spans lie at 8–28 (LILKFNMISFFSAVSLLHYFL) and 73–93 (LWFILYKVLICIYTYSISISL).

It localises to the membrane. This is an uncharacterized protein from Saccharomyces cerevisiae (strain ATCC 204508 / S288c) (Baker's yeast).